Here is a 160-residue protein sequence, read N- to C-terminus: MGVFNYETETTSVIPAARLFKAFILEGDTLIPKVAPQAISSVENIEGNGGPGTIKKITFPEGSPFKYVKERVDEVDHANFKYSYSMIEGGALGDTLEKICNEIKIVATPDGGSILKISNKYHTKGDHEMKAEHMKAIKEKGEALLRAVESYLLAHSDAYN.

4 residues coordinate brassinolide: K55, Y82, Y84, and N101.

It belongs to the BetVI family.

The protein resides in the cytoplasm. Its function is as follows. May be a general steroid carrier protein. This chain is Major pollen allergen Bet v 1-B (BETV1B), found in Betula pendula (European white birch).